The following is a 501-amino-acid chain: Glucans biosynthesis protein G (501 aa).

The N-terminal stretch at 1–25 (MNRRQVLTGLAALPLLQAKPDPAAA) is a signal peptide.

It belongs to the OpgD/OpgG family.

It is found in the periplasm. Its pathway is glycan metabolism; osmoregulated periplasmic glucan (OPG) biosynthesis. Involved in the biosynthesis of osmoregulated periplasmic glucans (OPGs). In Rhodopseudomonas palustris (strain ATCC BAA-98 / CGA009), this protein is Glucans biosynthesis protein G.